Reading from the N-terminus, the 1029-residue chain is Multidrug resistance protein MdtC (1029 aa).

The next 11 helical transmembrane spans lie at 15–35 (ILLS…LPVA), 333–353 (EVEQ…FLFL), 360–380 (LIPA…MYLC), 387–407 (LSLM…IVAL), 431–451 (VGFT…PLLL), 469–489 (VAIG…CGWL), 528–548 (LVGL…ISIP), 853–873 (VILI…LYES), 897–917 (AFDA…IGIV), 953–973 (PIMM…IASG), and 984–1004 (ITIV…TPVV).

The protein belongs to the resistance-nodulation-cell division (RND) (TC 2.A.6) family. MdtC subfamily. As to quaternary structure, part of a tripartite efflux system composed of MdtA, MdtB and MdtC. MdtC forms a heteromultimer with MdtB.

The protein resides in the cell inner membrane. This is Multidrug resistance protein MdtC from Cronobacter sakazakii (strain ATCC BAA-894) (Enterobacter sakazakii).